The chain runs to 317 residues: Nitrilase (317 aa).

In terms of domain architecture, CN hydrolase spans 5-280 (VKVAVVQAEP…DGVIISELDM (276 aa)). Catalysis depends on glutamate 45, which acts as the Proton acceptor. Lysine 125 is a catalytic residue. The active-site Nucleophile is the cysteine 165.

The protein belongs to the carbon-nitrogen hydrolase superfamily. Nitrilase family.

It carries out the reaction a nitrile + 2 H2O = a carboxylate + NH4(+). Functionally, nitrilase that hydrolyzes preferentially 4-cyanopyridine. Is also able to hydrolyze some aliphatic nitriles, such as phenylacetonitrile. The protein is Nitrilase of Meyerozyma guilliermondii (strain ATCC 6260 / CBS 566 / DSM 6381 / JCM 1539 / NBRC 10279 / NRRL Y-324) (Yeast).